Consider the following 641-residue polypeptide: Probable licABCH operon regulator (641 aa).

2 PRD domains span residues 184–289 (ILPK…TQSQ) and 296–403 (SIEE…KKTE). His-219, His-278, His-333, and His-392 each carry phosphohistidine; by HPr. In terms of domain architecture, PTS EIIB type-2 spans 407–498 (KRCIIVCASG…ILSDEKEKAN (92 aa)). Residue Cys-413 is modified to Phosphocysteine; by EIIA. The region spanning 499–638 (RYLKKELVFF…QELSDVFDQK (140 aa)) is the PTS EIIA type-2 domain. His-559 is modified (phosphohistidine; by EIIB).

Belongs to the transcriptional antiterminator BglG family.

With respect to regulation, the regulatory activity of LicR is modulated by phosphorylation and dephosphorylation of the various LicR domains. It becomes activated via phosphoryl group transfer from PEP, EI and HPr on the two conserved histidine residues in the PRD 2 domain, whereas phosphorylation of the EIIA-like domain on His-559 by the PTS EIIB component LicB inactivates LicR. Positive regulator of the licABCH operon. In Bacillus subtilis (strain 168), this protein is Probable licABCH operon regulator (licR).